Reading from the N-terminus, the 497-residue chain is Zinc finger protein ZIC 2-B (497 aa).

Disordered regions lie at residues histidine 58–alanine 107 and serine 143–histidine 180. The segment covering proline 66 to alanine 88 has biased composition (gly residues). Residues proline 97–alanine 107 show a composition bias toward polar residues. The span at leucine 161–leucine 171 shows a compositional bias: basic residues. The C2H2-type 1; atypical zinc finger occupies leucine 273 to histidine 308. The C2H2-type 2; atypical zinc finger occupies histidine 317–histidine 344. C2H2-type zinc fingers lie at residues phenylalanine 350–histidine 374, phenylalanine 380–histidine 404, and tyrosine 410–histidine 432. Positions serine 423–alanine 473 are disordered. The segment covering serine 434–serine 452 has biased composition (low complexity). The span at serine 459–leucine 469 shows a compositional bias: polar residues.

Belongs to the GLI C2H2-type zinc-finger protein family.

It is found in the nucleus. It localises to the cytoplasm. Its function is as follows. Transcriptional repressor that inhibits neurogenesis and induces neural and neural crest differentiation. Regulates anteroposterior patterning in early development by inhibiting expression of the nodal genes through the inhibition of vegt. Required for gastrulation movements and for proper anterior neural and axial development. May also act as a transcriptional activator. May bind to the minimal GLI-consensus sequence 5'-TGGGTGGTC-3'. The polypeptide is Zinc finger protein ZIC 2-B (zic2-b) (Xenopus laevis (African clawed frog)).